The following is a 940-amino-acid chain: UvrABC system protein A (940 aa).

31-38 (GLSGSGKS) contacts ATP. The C4-type zinc-finger motif lies at 253–280 (CPICGYSMRELEPRLFSFNNPAGACPTC). 2 consecutive ABC transporter domains span residues 310 to 587 (WDRR…PESL) and 607 to 937 (ANPE…RFLK). An ATP-binding site is contributed by 640-647 (GVSGSGKS). The segment at 740–766 (CEACQGDGVIKVEMHFLPDIYVPCDQC) adopts a C4-type zinc-finger fold.

Belongs to the ABC transporter superfamily. UvrA family. Forms a heterotetramer with UvrB during the search for lesions.

The protein localises to the cytoplasm. Its function is as follows. The UvrABC repair system catalyzes the recognition and processing of DNA lesions. UvrA is an ATPase and a DNA-binding protein. A damage recognition complex composed of 2 UvrA and 2 UvrB subunits scans DNA for abnormalities. When the presence of a lesion has been verified by UvrB, the UvrA molecules dissociate. In Escherichia coli O6:H1 (strain CFT073 / ATCC 700928 / UPEC), this protein is UvrABC system protein A.